Reading from the N-terminus, the 848-residue chain is MGQHQSRDDSHGGDRHRHHDAGTSGPTSPSDHDPYPSRTGRGSRRNLVASIVGGGSNNELPERKETAAERQMRRLERERVARVEERERSIREEHVDGGYLVTMGVYTGPEDFNKAIVRQLMIERRVAPFWRGLEDYESDWTEHQLVAAGRGLPIPAADEIPSEDSARPHSSNSTNAPSSNLQNLTVPIASRSQSASYDTSVGRSPSHSSFNTSSPTSPLNAPATSTSLLRPRAKTLGLKSSSKEPSASDSAPREIQLPRDSQVNGQAIEAFLYKDAVECSICLIFYPPYLNRTRCCDQSICSECFVQIKRPDPHTPEHHGPPQPAPDQAEDTEMLVSEPAACPYCQRPEFGVTYEPPPFRRGLVYAKPSRELANFSSAMSSSSSITSPPITSPGLAPRVDNRRRATSLSANDSNVITTDRIRPDWSAKLEAANLRKAKKNAAASALHAAAYVLPGTSENRSYVFGRSRFGRNRSDPDNSGSATPSNRDTSSRTAAESSGQARREGRDSHAARRTRDVEDMMMAEAIRLSIVAEEERKKKAEKEAAKEAAKNAKKQAKEDKKKEKKERKSIYGTNGHSASSSMLNLGNSLAATLTGRRRGDSVASNLATEVTPEEVEEPLQGKGKGVAHPYLGNDGSATDNGLLGTQHLDPSTSSSLLETHQSIPSPTSPDKPSHLRQMSTASSASSSVAESGNGTNPQGSSTSIESPGVTDTNEGNEDGDTGAESMFNFRSLTAMIEKENDNEKTDAVHVENAHEASGSRRGSPDETASQDMDVSMETLRPRDSPQQPKPDHHVPMGLQMPAPKIDTSIVTPQLTLTPDTPALMSPTEENGKQLGSNLQNLSNNEISQ.

The segment covering 1 to 13 (MGQHQSRDDSHGG) has biased composition (basic and acidic residues). Disordered stretches follow at residues 1–67 (MGQH…KETA), 154–260 (IPAA…LPRD), 312–332 (DPHT…AEDT), 378–411 (AMSS…LSAN), 466–518 (RSRF…RDVE), 541–582 (EKEA…SSSM), 595–800 (GRRR…GLQM), and 813–848 (QLTL…EISQ). Over residues 168 to 203 (PHSSNSTNAPSSNLQNLTVPIASRSQSASYDTSVGR) the composition is skewed to polar residues. Composition is skewed to low complexity over residues 204–218 (SPSH…PTSP) and 239–250 (KSSSKEPSASDS). Residues 378–393 (AMSSSSSITSPPITSP) are compositionally biased toward low complexity. Over residues 477–500 (DNSGSATPSNRDTSSRTAAESSGQ) the composition is skewed to polar residues. 2 stretches are compositionally biased toward basic and acidic residues: residues 501 to 518 (ARRE…RDVE) and 541 to 569 (EKEA…ERKS). Composition is skewed to polar residues over residues 571 to 582 (YGTNGHSASSSM) and 648 to 670 (LDPS…TSPD). The segment covering 679-691 (STASSASSSVAES) has biased composition (low complexity). Positions 692 to 713 (GNGTNPQGSSTSIESPGVTDTN) are enriched in polar residues. Basic and acidic residues-rich tracts occupy residues 736–764 (IEKE…RGSP) and 779–794 (LRPR…DHHV). A compositionally biased stretch (low complexity) spans 833-848 (QLGSNLQNLSNNEISQ).

Belongs to the SIP5 family.

It is found in the cytoplasm. Functionally, may negatively regulate the snf1 kinase. This chain is Protein sip5 (sip5), found in Botryotinia fuckeliana (strain B05.10) (Noble rot fungus).